A 276-amino-acid chain; its full sequence is NADH-cytochrome b5 reductase 2 (276 aa).

The FAD-binding FR-type domain maps to 15–127 (EAKYPLPLIE…RGPTGRLFYN (113 aa)). K17 is modified (N6-acetyllysine). Y18 is subject to Phosphotyrosine. FAD contacts are provided by residues 107–137 (ENMK…IKAN) and 146–181 (LVHH…RMSL).

This sequence belongs to the flavoprotein pyridine nucleotide cytochrome reductase family. FAD is required as a cofactor.

It catalyses the reaction 2 Fe(III)-[cytochrome b5] + NADH = 2 Fe(II)-[cytochrome b5] + NAD(+) + H(+). NADH-cytochrome b5 reductases are involved in desaturation and elongation of fatty acids, cholesterol biosynthesis, drug metabolism, and, in erythrocyte, methemoglobin reduction. Responsible for NADH-dependent lucigenin chemiluminescence in spermatozoa by reducing both lucigenin and 2-[4-iodophenyl]-3-[4-nitrophenyl]-5-[2,4-disulfophenyl]-2H tetrazolium monosodium salt (WST-1). In Mus musculus (Mouse), this protein is NADH-cytochrome b5 reductase 2 (Cyb5r2).